We begin with the raw amino-acid sequence, 492 residues long: 2,3-bisphosphoglycerate-independent phosphoglycerate mutase (492 aa).

The Mn(2+) site is built by aspartate 11 and serine 61. Catalysis depends on serine 61, which acts as the Phosphoserine intermediate. Residues histidine 118, 147–148 (RD), arginine 178, arginine 184, 248–251 (RNDR), and lysine 320 each bind substrate. Aspartate 386, histidine 390, aspartate 427, histidine 428, and histidine 445 together coordinate Mn(2+).

The protein belongs to the BPG-independent phosphoglycerate mutase family. In terms of assembly, monomer. Mn(2+) is required as a cofactor.

The enzyme catalyses (2R)-2-phosphoglycerate = (2R)-3-phosphoglycerate. It functions in the pathway carbohydrate degradation; glycolysis; pyruvate from D-glyceraldehyde 3-phosphate: step 3/5. Functionally, catalyzes the interconversion of 2-phosphoglycerate and 3-phosphoglycerate. In Campylobacter jejuni subsp. doylei (strain ATCC BAA-1458 / RM4099 / 269.97), this protein is 2,3-bisphosphoglycerate-independent phosphoglycerate mutase.